We begin with the raw amino-acid sequence, 966 residues long: Alanine--tRNA ligase (966 aa).

Residues histidine 646, histidine 650, cysteine 750, and histidine 754 each contribute to the Zn(2+) site. Residues 927–949 (DRLGGGGGGRPSLASAGGRDPEA) form a disordered region.

Belongs to the class-II aminoacyl-tRNA synthetase family. The cofactor is Zn(2+).

It is found in the cytoplasm. It carries out the reaction tRNA(Ala) + L-alanine + ATP = L-alanyl-tRNA(Ala) + AMP + diphosphate. Its function is as follows. Catalyzes the attachment of alanine to tRNA(Ala) in a two-step reaction: alanine is first activated by ATP to form Ala-AMP and then transferred to the acceptor end of tRNA(Ala). Also edits incorrectly charged Ser-tRNA(Ala) and Gly-tRNA(Ala) via its editing domain. This is Alanine--tRNA ligase from Salinibacter ruber (strain DSM 13855 / M31).